The following is a 284-amino-acid chain: Steroidogenic acute regulatory protein, mitochondrial (284 aa).

Residues 1–62 (MFLATFKLCA…RRSSLLGSQL (62 aa)) constitute a mitochondrion transit peptide. Phosphoserine; by PKA is present on residues S56 and S194. The START domain occupies 66-279 (LYSDQELSYI…LRKRLEASPA (214 aa)).

In terms of assembly, may interact with TSPO. In terms of tissue distribution, expressed within glia and neurons in discrete regions of the brain.

The protein resides in the mitochondrion. The enzyme catalyses cholesterol(in) = cholesterol(out). Its pathway is steroid metabolism; cholesterol metabolism. Functionally, plays a key role in steroid hormone synthesis by enhancing the metabolism of cholesterol into pregnenolone. Transporter that binds to and transport cholesterol through the intermembrane space of the mitochondrion. The polypeptide is Steroidogenic acute regulatory protein, mitochondrial (Star) (Mus musculus (Mouse)).